Reading from the N-terminus, the 158-residue chain is Transcription elongation factor GreA (158 aa).

Belongs to the GreA/GreB family.

Its function is as follows. Necessary for efficient RNA polymerase transcription elongation past template-encoded arresting sites. The arresting sites in DNA have the property of trapping a certain fraction of elongating RNA polymerases that pass through, resulting in locked ternary complexes. Cleavage of the nascent transcript by cleavage factors such as GreA or GreB allows the resumption of elongation from the new 3'terminus. GreA releases sequences of 2 to 3 nucleotides. The sequence is that of Transcription elongation factor GreA from Baumannia cicadellinicola subsp. Homalodisca coagulata.